The primary structure comprises 468 residues: MKKYQQLAEQLREQIASGIWQPGDRLPSLRDQVALSGMSFMTVSHAYQLLESQGYIIARPQSGYYVAPQAIKMPKAPVIPVTRDEAVDINTYIFDMLQASRDPSVVPFASAFPDPRLFPLQQLNRSLAQVSKTATAMSVIENLPPGNAELRQAIARRYALQGITISPDEIVITAGALEALNLSLQAVTEPGDWVIVENPCFYGALQALERLRLKALSVATDVKEGIDLQALELALQEYPVKACWLMTNSQNPLGFTLTPQKKAQLVALLNQYNVTLIEDDVYSELYFGREKPLPAKAWDRHDGVLHCSSFSKCLVPGFRIGWVAAGKHARKIQRLQLMSTLSTSSPMQLALVDYLSTRRYDAHLRRLRRQLAERKQRAWQALLRYLPAEVKIHHNDSGYFLWLELPEPLDAGELSLAALTHHISIAPGKMFSTGENWSRFFRFNTAWQWGEREEQAVKQLGKLIQERL.

Residues 1–69 (MKKYQQLAEQ…PQSGYYVAPQ (69 aa)) form the HTH gntR-type domain. N6-(pyridoxal phosphate)lysine is present on Lys312.

It in the C-terminal section; belongs to the class-I pyridoxal-phosphate-dependent aminotransferase family.

This is an uncharacterized protein from Escherichia coli (strain K12).